The following is a 479-amino-acid chain: MELGKTKSVHIVGVGGAGMSAIAELLLKSGFRVTGSDLSSGEVTEKLAEHGAIIYKGHRAEQVAGSDVVVYSSAIRAEDNIELIAAEKAGIPVIKRDEMLGELMRYTYGICIAGTHGKTTTTAMIATMLIESDESPTVMIGGISDYLKGSTVVGEGKYMVIEADEYDRAFLKLTPTIAVVNSLESEHMDTYGTLDELKEAFVAFANKVPFYGRVICCVDWPEIRKIMPKMNRLCTTFGIDEPADVMAFDIVLDNQHTTFSIKAFGQEYRDVSLQVPGRHNVLNALAAFSTGLELGILPERLIAGLGRYSGMRRRFQVKYDNGHGLMVVDDYAHHPTEVKATVRAAKSGWRDSRIVAVFQPHLFSRTREFAHEYGWALSHADMVYVADIYPAREKGVDYPGVDGELIADAVRKAGGKHVEFVADMQNLFTALKEWSVNGNMLLFMGAGDITHLATRVANFCREGVAVQGNEDSQSGFAAS.

Residue 114–120 (GTHGKTT) coordinates ATP.

Belongs to the MurCDEF family.

The protein resides in the cytoplasm. The enzyme catalyses UDP-N-acetyl-alpha-D-muramate + L-alanine + ATP = UDP-N-acetyl-alpha-D-muramoyl-L-alanine + ADP + phosphate + H(+). It participates in cell wall biogenesis; peptidoglycan biosynthesis. In terms of biological role, cell wall formation. This chain is UDP-N-acetylmuramate--L-alanine ligase, found in Pelodictyon phaeoclathratiforme (strain DSM 5477 / BU-1).